The chain runs to 336 residues: Succinylglutamate desuccinylase (336 aa).

The Zn(2+) site is built by histidine 59, glutamate 62, and histidine 151. Residue glutamate 215 is part of the active site.

This sequence belongs to the AspA/AstE family. Succinylglutamate desuccinylase subfamily. Requires Zn(2+) as cofactor.

It catalyses the reaction N-succinyl-L-glutamate + H2O = L-glutamate + succinate. It participates in amino-acid degradation; L-arginine degradation via AST pathway; L-glutamate and succinate from L-arginine: step 5/5. In terms of biological role, transforms N(2)-succinylglutamate into succinate and glutamate. The polypeptide is Succinylglutamate desuccinylase (Pseudomonas fluorescens (strain ATCC BAA-477 / NRRL B-23932 / Pf-5)).